We begin with the raw amino-acid sequence, 679 residues long: Protein white (679 aa).

The disordered stretch occupies residues 1–34; sequence MGQEDQEVLIRGGKATSTSAESLNNNNEQPYEQS. Over residues 15–34 the composition is skewed to polar residues; the sequence is ATSTSAESLNNNNEQPYEQS. An ABC transporter domain is found at 84 to 332; sequence NRVKGVFCNE…FSYIGATCPT (249 aa). 121-128 contributes to the ATP binding site; that stretch reads GSSGAGKT. 5 consecutive transmembrane segments (helical) span residues 427-445, 457-477, 507-525, 534-555, and 568-586; these read LLQTTMVAVLIGLIFLGQQ, AIFLFLTNMTFQNSFATITVF, LPLFLVVPFLFTAIAYPLI, FFTALALVTLVANVSTSFGYLI, and VGPPVIIPFLLFGGFFLNS. N-linked (GlcNAc...) asparagine glycosylation is found at Asn628 and Asn643. Residues 651-670 traverse the membrane as a helical segment; the sequence is FDFIGLALLIVGFRISAYIA.

Belongs to the ABC transporter superfamily. ABCG family. Eye pigment precursor importer (TC 3.A.1.204) subfamily.

The protein localises to the membrane. May be part of a membrane-spanning permease system necessary for the transport of pigment precursors into pigment cells responsible for eye color. In Ceratitis capitata (Mediterranean fruit fly), this protein is Protein white (W).